The sequence spans 136 residues: Fluoride-specific ion channel FluC (136 aa).

Transmembrane regions (helical) follow at residues 3 to 23 (TLPP…GAVL), 46 to 66 (ATLA…GVLF), 78 to 98 (LLIG…SLEV), and 109 to 129 (FAAL…VFGL). Positions 86 and 89 each coordinate Na(+).

This sequence belongs to the fluoride channel Fluc/FEX (TC 1.A.43) family.

It is found in the cell inner membrane. It catalyses the reaction fluoride(in) = fluoride(out). Its activity is regulated as follows. Na(+) is not transported, but it plays an essential structural role and its presence is essential for fluoride channel function. Its function is as follows. Fluoride-specific ion channel. Important for reducing fluoride concentration in the cell, thus reducing its toxicity. The sequence is that of Fluoride-specific ion channel FluC from Erythrobacter litoralis (strain HTCC2594).